A 407-amino-acid chain; its full sequence is Ameloblastin (407 aa).

The signal sequence occupies residues 1 to 26; that stretch reads MSASKIPLFKMKGLILFLSLVKMSLA. P42 is modified (hydroxyproline). At S48 the chain carries Phosphoserine. 2 disordered regions span residues 124–143 and 259–304; these read GVQV…PGQL and QNSP…ENPA.

Belongs to the ameloblastin family. Ameloblast-specific.

It localises to the secreted. The protein localises to the extracellular space. It is found in the extracellular matrix. In terms of biological role, involved in the mineralization and structural organization of enamel. In Mus musculus (Mouse), this protein is Ameloblastin (Ambn).